We begin with the raw amino-acid sequence, 910 residues long: Seizure 6-like protein 2 (910 aa).

An N-terminal signal peptide occupies residues 1–27 (MGTPKAQHPPPSQLLLLILLSCAWIEG). Topologically, residues 28–844 (LPLKEDEMMP…DPSRQLEGGN (817 aa)) are extracellular. Residues 70-152 (PGSDPDPTLA…PLRPEGGEEE (83 aa)) are disordered. Over residues 123–145 (LTPPPGTTAPPPPGPASPVPPLR) the composition is skewed to pro residues. Cys-173 and Cys-202 are oxidised to a cystine. The 114-residue stretch at 173–286 (CNNNISEGEG…NGFRIHYQAY (114 aa)) folds into the CUB 1 domain. Asn-222 carries N-linked (GlcNAc...) asparagine glycosylation. The 60-residue stretch at 288 to 347 (LSCGFPPRPAHGDVSVTDLHPGGTATFHCDSGYQLQGEETLICLNGTRPAWTGEPPSCTA) folds into the Sushi 1 domain. 12 cysteine pairs are disulfide-bonded: Cys-290-Cys-330, Cys-316-Cys-345, Cys-349-Cys-376, Cys-464-Cys-508, Cys-491-Cys-523, Cys-527-Cys-553, Cys-644-Cys-686, Cys-672-Cys-699, Cys-705-Cys-747, Cys-733-Cys-764, Cys-771-Cys-813, and Cys-799-Cys-828. Residues Asn-332, Asn-373, Asn-473, and Asn-517 are each glycosylated (N-linked (GlcNAc...) asparagine). The 111-residue stretch at 349–459 (CGGTIHNATL…LLLSLRFEAF (111 aa)) folds into the CUB 2 domain. The Sushi 2 domain occupies 462 to 525 (DRCFPPFLAH…WNDTEPACKA (64 aa)). Residues 527 to 638 (CGGELSEPAG…QGFVLHFKEV (112 aa)) form the CUB 3 domain. Sushi domains are found at residues 642–701 (DTCP…ACQK), 703–766 (MTCA…KCAL), and 769–830 (EPCL…LCKV). Residues 845–865 (LALAILLPLGLVIVLGIGVYI) traverse the membrane as a helical segment. Over 866-910 (YYTKLQGKSLFGFSGSHSYSPITVESDFSNPLYEAGDTREYEVSI) the chain is Cytoplasmic.

The protein belongs to the SEZ6 family. Expressed exclusively in the brain, predominantly in the neurons. Wide expression in the gray matter of the brain with high levels in the olfactory bulb, anterior olfactory nuclei, hippocampal formation and cerebellar cortex. Detected diffusely and weakly in the white matter, such as the corpus callosum and cerebellar medulla. In the cerebellar cortex, intensely expressed in Purkinje cells (PC) and granule cells. Detected also in interneurons in the molecular layer. Up-regulated at two weeks after birth.

Its subcellular location is the cell membrane. The protein resides in the endoplasmic reticulum membrane. May contribute to specialized endoplasmic reticulum functions in neurons. The protein is Seizure 6-like protein 2 (Sez6l2) of Mus musculus (Mouse).